Here is a 138-residue protein sequence, read N- to C-terminus: Cysteine desulfuration protein SufE (138 aa).

Cys51 acts as the Cysteine persulfide intermediate in catalysis.

It belongs to the SufE family. Homodimer. Interacts with SufS.

It is found in the cytoplasm. It participates in cofactor biosynthesis; iron-sulfur cluster biosynthesis. Functionally, participates in cysteine desulfuration mediated by SufS. Cysteine desulfuration mobilizes sulfur from L-cysteine to yield L-alanine and constitutes an essential step in sulfur metabolism for biosynthesis of a variety of sulfur-containing biomolecules. Functions as a sulfur acceptor for SufS, by mediating the direct transfer of the sulfur atom from the S-sulfanylcysteine of SufS, an intermediate product of cysteine desulfuration process. The sequence is that of Cysteine desulfuration protein SufE from Salmonella arizonae (strain ATCC BAA-731 / CDC346-86 / RSK2980).